The sequence spans 701 residues: Dynein axonemal intermediate chain 1 (701 aa).

Disordered regions lie at residues 1–45 (MPSK…VRPP) and 119–165 (EMVA…DIPA). A phosphoserine mark is found at Ser-124 and Ser-127. Residues 136 to 155 (ENLEEEEEPKEGEGEAEAEA) show a composition bias toward acidic residues. 5 WD repeats span residues 382 to 422 (SSES…SQPC), 431 to 474 (KHTD…LVHI), 539 to 579 (AHNM…PMFI), 581 to 621 (DLNS…YEAI), and 629 to 668 (KKKNKITHVQFNPIHPIIIVGDDRGHIICLKLSPNLRKMP).

This sequence belongs to the dynein intermediate chain family. Consists of at least two heavy chains and a number of intermediate and light chains. Interacts with BICD2. Interacts with CFAP45 and CFAP52. Interacts with CFAP53.

It is found in the cytoplasm. The protein resides in the cytoskeleton. It localises to the cilium axoneme. Part of the dynein complex of respiratory cilia. This Mus musculus (Mouse) protein is Dynein axonemal intermediate chain 1 (Dnai1).